The primary structure comprises 127 residues: Mitochondrial pyruvate carrier 2 (127 aa).

The Mitochondrial matrix segment spans residues 2–40 (AAAGARGLRATYHRLMDKVELLLPKKLRPLYNHPAGPRT). Residue lysine 26 is modified to N6-acetyllysine. The helical transmembrane segment at 41–61 (VFFWAPIMKWGLVCAGLADMA) threads the bilayer. Topologically, residues 62 to 72 (RPAEKLSTAQS) are mitochondrial intermembrane. Residues 73–90 (TVLMATGFIWSRYSLVII) traverse the membrane as a helical segment. The Mitochondrial matrix portion of the chain corresponds to 91-95 (PKNWS). The chain crosses the membrane as a helical span at residues 96–115 (LFAVNFFVGSAGASQLFRIW). Topologically, residues 116–127 (KYNQELKSKGIQ) are mitochondrial intermembrane.

Belongs to the mitochondrial pyruvate carrier (MPC) (TC 2.A.105) family. In terms of assembly, homodimer. Homooligomer. Forms heterodimers with MPC1 and MPC1L. The heterodimer is the more stable and dominant form. Liver, kidney, and brain.

Its subcellular location is the mitochondrion inner membrane. It carries out the reaction pyruvate(out) + H(+)(out) = pyruvate(in) + H(+)(in). Its function is as follows. Mediates the uptake of pyruvate into mitochondria. This Rattus norvegicus (Rat) protein is Mitochondrial pyruvate carrier 2 (Mpc2).